The primary structure comprises 298 residues: Protoheme IX farnesyltransferase 1 (298 aa).

A run of 9 helical transmembrane segments spans residues 21–41 (QVWW…INSF), 43–63 (SYLI…SMGA), 94–114 (KGAF…LLIF), 118–138 (LAAL…SYLL), 144–164 (YSII…WYTV), 168–188 (FSWI…VHVW), 215–235 (TAVS…IPYF), 236–256 (LGFF…PIVI), and 274–294 (FIYT…IHII).

Belongs to the UbiA prenyltransferase family. Protoheme IX farnesyltransferase subfamily.

The protein localises to the cell membrane. It carries out the reaction heme b + (2E,6E)-farnesyl diphosphate + H2O = Fe(II)-heme o + diphosphate. Its pathway is porphyrin-containing compound metabolism; heme O biosynthesis; heme O from protoheme: step 1/1. Converts heme B (protoheme IX) to heme O by substitution of the vinyl group on carbon 2 of heme B porphyrin ring with a hydroxyethyl farnesyl side group. This chain is Protoheme IX farnesyltransferase 1, found in Picrophilus torridus (strain ATCC 700027 / DSM 9790 / JCM 10055 / NBRC 100828 / KAW 2/3).